A 432-amino-acid polypeptide reads, in one-letter code: Trigger factor (432 aa).

The 86-residue stretch at 161–246 (EDRVTIDFTG…LKKVEERELP (86 aa)) folds into the PPIase FKBP-type domain.

It belongs to the FKBP-type PPIase family. Tig subfamily.

The protein localises to the cytoplasm. It carries out the reaction [protein]-peptidylproline (omega=180) = [protein]-peptidylproline (omega=0). In terms of biological role, involved in protein export. Acts as a chaperone by maintaining the newly synthesized protein in an open conformation. Functions as a peptidyl-prolyl cis-trans isomerase. This Salmonella typhi protein is Trigger factor.